Consider the following 50-residue polypeptide: Sperm protamine P1 (50 aa).

The protein belongs to the protamine P1 family. In terms of tissue distribution, testis.

The protein localises to the nucleus. It localises to the chromosome. Its function is as follows. Protamines substitute for histones in the chromatin of sperm during the haploid phase of spermatogenesis. They compact sperm DNA into a highly condensed, stable and inactive complex. This chain is Sperm protamine P1 (PRM1), found in Trachypithecus vetulus (Purple-faced langur).